Consider the following 125-residue polypeptide: Small ribosomal subunit protein uS13 (125 aa).

The disordered stretch occupies residues 90–125 (QRHRKGLPVRGQRTKTNARTRKGPKRTVAGKKKATK).

Belongs to the universal ribosomal protein uS13 family. In terms of assembly, part of the 30S ribosomal subunit. Forms a loose heterodimer with protein S19. Forms two bridges to the 50S subunit in the 70S ribosome.

In terms of biological role, located at the top of the head of the 30S subunit, it contacts several helices of the 16S rRNA. In the 70S ribosome it contacts the 23S rRNA (bridge B1a) and protein L5 of the 50S subunit (bridge B1b), connecting the 2 subunits; these bridges are implicated in subunit movement. Contacts the tRNAs in the A and P-sites. The chain is Small ribosomal subunit protein uS13 from Bifidobacterium longum subsp. infantis (strain ATCC 15697 / DSM 20088 / JCM 1222 / NCTC 11817 / S12).